A 171-amino-acid polypeptide reads, in one-letter code: UPF0303 protein YPN_2129 (171 aa).

It belongs to the UPF0303 family.

This Yersinia pestis bv. Antiqua (strain Nepal516) protein is UPF0303 protein YPN_2129.